A 765-amino-acid polypeptide reads, in one-letter code: ATP-dependent RNA helicase DBP4 (765 aa).

A Q motif motif is present at residues 48–76 (SQFSDLPITENTLKGLKEATFVSLTDIQK). A Helicase ATP-binding domain is found at 79–253 (IPIALKGEDL…RLSLTNPNKI (175 aa)). 92–99 (ARTGSGKT) is a binding site for ATP. The short motif at 201–204 (DEAD) is the DEAD box element. The Helicase C-terminal domain maps to 267–439 (SLEQYYVKVP…SIRPQLQSLC (173 aa)). Basic and acidic residues-rich tracts occupy residues 655–668 (KISD…ERQK) and 720–738 (PVSK…KSKN). Positions 655 to 765 (KISDITDKEV…ESLTARLIGN (111 aa)) are disordered. Residues 744–756 (VEYDEPETLEDLE) show a composition bias toward acidic residues.

The protein belongs to the DEAD box helicase family. DDX10/DBP4 subfamily. In terms of assembly, interacts with the U3 and U14 snoRNAs. Associates with pre-ribosomal complexes.

The protein localises to the nucleus. The protein resides in the nucleolus. It catalyses the reaction ATP + H2O = ADP + phosphate + H(+). Functionally, ATP-dependent RNA helicase required for ribosome biogenesis. Involved in the release of U14 snoRNA in pre-ribosomal complexes. Required for pre-rRNA cleavage at site A2. The protein is ATP-dependent RNA helicase DBP4 (DBP4) of Candida albicans (strain SC5314 / ATCC MYA-2876) (Yeast).